The chain runs to 470 residues: ATP synthase subunit beta (470 aa).

An ATP-binding site is contributed by 157 to 164; the sequence is GGAGVGKT.

The protein belongs to the ATPase alpha/beta chains family. As to quaternary structure, F-type ATPases have 2 components, CF(1) - the catalytic core - and CF(0) - the membrane proton channel. CF(1) has five subunits: alpha(3), beta(3), gamma(1), delta(1), epsilon(1). CF(0) has three main subunits: a(1), b(2) and c(9-12). The alpha and beta chains form an alternating ring which encloses part of the gamma chain. CF(1) is attached to CF(0) by a central stalk formed by the gamma and epsilon chains, while a peripheral stalk is formed by the delta and b chains.

It localises to the cell inner membrane. The catalysed reaction is ATP + H2O + 4 H(+)(in) = ADP + phosphate + 5 H(+)(out). Functionally, produces ATP from ADP in the presence of a proton gradient across the membrane. The catalytic sites are hosted primarily by the beta subunits. The polypeptide is ATP synthase subunit beta (Citrifermentans bemidjiense (strain ATCC BAA-1014 / DSM 16622 / JCM 12645 / Bem) (Geobacter bemidjiensis)).